The chain runs to 228 residues: CD302 antigen (228 aa).

The N-terminal stretch at 1–20 is a signal peptide; it reads MPHAALSSLVLLSLATAIFA. Residues 21–165 lie on the Extracellular side of the membrane; that stretch reads DCPSSIWVQF…YDKKYLSDNH (145 aa). A C-type lectin domain is found at 30-149; that stretch reads FQGSCYTFLQ…CEMSSVTGTL (120 aa). N-linked (GlcNAc...) asparagine glycosylation occurs at N107. Residues C125 and C140 are joined by a disulfide bond. The helical transmembrane segment at 166–186 threads the bilayer; the sequence is ILISTLVIASTVTLAVLGAVI. Residues 187-228 are Cytoplasmic-facing; sequence WFLYRRSARSGFTSFSPAPQSPYSDGCALVVSEEDEYSVQLD.

The protein localises to the membrane. It localises to the cell projection. The protein resides in the filopodium. It is found in the cytoplasm. Its subcellular location is the cell cortex. The protein localises to the microvillus. Its function is as follows. Potential multifunctional C-type lectin receptor that may play roles in endocytosis and phagocytosis as well as in cell adhesion and migration. The polypeptide is CD302 antigen (Cd302) (Rattus norvegicus (Rat)).